A 414-amino-acid polypeptide reads, in one-letter code: Glucose-1-phosphate adenylyltransferase (414 aa).

Alpha-D-glucose 1-phosphate contacts are provided by residues Gly-164, 181 to 182 (EK), and Ser-199.

The protein belongs to the bacterial/plant glucose-1-phosphate adenylyltransferase family. In terms of assembly, homotetramer.

The enzyme catalyses alpha-D-glucose 1-phosphate + ATP + H(+) = ADP-alpha-D-glucose + diphosphate. It functions in the pathway glycan biosynthesis; glycogen biosynthesis. In terms of biological role, involved in the biosynthesis of ADP-glucose, a building block required for the elongation reactions to produce glycogen. Catalyzes the reaction between ATP and alpha-D-glucose 1-phosphate (G1P) to produce pyrophosphate and ADP-Glc. The protein is Glucose-1-phosphate adenylyltransferase of Leifsonia xyli subsp. xyli (strain CTCB07).